Reading from the N-terminus, the 66-residue chain is Large ribosomal subunit protein bL32 (66 aa).

Belongs to the bacterial ribosomal protein bL32 family.

The polypeptide is Large ribosomal subunit protein bL32 (Rickettsia conorii (strain ATCC VR-613 / Malish 7)).